A 154-amino-acid chain; its full sequence is Cold shock domain-containing protein C2 (154 aa).

2 disordered regions span residues 1–22 (MTSESTSPPVVPPLHSPKSPVW) and 36–62 (ERGGGVSPRDLPSPLPTKRTRTYSATA). Phosphoserine is present on Ser19. The 68-residue stretch at 69 to 136 (VFKGVCKQFS…KFQAVEVVLT (68 aa)) folds into the CSD domain.

In terms of tissue distribution, brain-specific. Expression restricted to the pyramidal neurons of the cerebral cortex and in the Purkinje cells of the cerebellum.

Its subcellular location is the nucleus. It localises to the cytoplasm. Functionally, RNA-binding factor which binds specifically to the very 3'-UTR ends of both histone H1 and H3.3 mRNAs, encompassing the polyadenylation signal. Might play a central role in the negative regulation of histone variant synthesis in the developing brain. The protein is Cold shock domain-containing protein C2 (Csdc2) of Rattus norvegicus (Rat).